The chain runs to 307 residues: Protease HtpX homolog (307 aa).

Helical transmembrane passes span 10–30 and 40–60; these read VITI…AYGL and ISII…QWLV. Position 144 (histidine 144) interacts with Zn(2+). Glutamate 145 is an active-site residue. Residue histidine 148 participates in Zn(2+) binding. Transmembrane regions (helical) follow at residues 156–176 and 187–207; these read LLLA…SMIF and FFLV…MILG. Glutamate 213 is a Zn(2+) binding site.

Belongs to the peptidase M48B family. It depends on Zn(2+) as a cofactor.

It localises to the cell membrane. The protein is Protease HtpX homolog of Picrophilus torridus (strain ATCC 700027 / DSM 9790 / JCM 10055 / NBRC 100828 / KAW 2/3).